The sequence spans 72 residues: Translation initiation factor IF-1 (72 aa).

An S1-like domain is found at 1 to 72 (MAKEGNIEME…SKGRIVYRAR (72 aa)).

It belongs to the IF-1 family. As to quaternary structure, component of the 30S ribosomal translation pre-initiation complex which assembles on the 30S ribosome in the order IF-2 and IF-3, IF-1 and N-formylmethionyl-tRNA(fMet); mRNA recruitment can occur at any time during PIC assembly.

The protein resides in the cytoplasm. Functionally, one of the essential components for the initiation of protein synthesis. Stabilizes the binding of IF-2 and IF-3 on the 30S subunit to which N-formylmethionyl-tRNA(fMet) subsequently binds. Helps modulate mRNA selection, yielding the 30S pre-initiation complex (PIC). Upon addition of the 50S ribosomal subunit IF-1, IF-2 and IF-3 are released leaving the mature 70S translation initiation complex. The chain is Translation initiation factor IF-1 from Hahella chejuensis (strain KCTC 2396).